A 449-amino-acid chain; its full sequence is Glutamate--tRNA ligase (449 aa).

Residues 10 to 20 carry the 'HIGH' region motif; sequence PSPTGHLHIGN. Residues 214–218 carry the 'KMSKS' region motif; it reads KLSKR. Position 217 (K217) interacts with ATP.

The protein belongs to the class-I aminoacyl-tRNA synthetase family. Glutamate--tRNA ligase type 1 subfamily. Monomer.

Its subcellular location is the cytoplasm. The catalysed reaction is tRNA(Glu) + L-glutamate + ATP = L-glutamyl-tRNA(Glu) + AMP + diphosphate. Its function is as follows. Catalyzes the attachment of glutamate to tRNA(Glu) in a two-step reaction: glutamate is first activated by ATP to form Glu-AMP and then transferred to the acceptor end of tRNA(Glu). This Acholeplasma laidlawii (strain PG-8A) protein is Glutamate--tRNA ligase.